The sequence spans 159 residues: Cyclic pyranopterin monophosphate synthase (159 aa).

Substrate is bound by residues 75–77 (LCH) and 113–114 (ME). Residue D128 is part of the active site.

Belongs to the MoaC family. In terms of assembly, homohexamer; trimer of dimers.

The catalysed reaction is (8S)-3',8-cyclo-7,8-dihydroguanosine 5'-triphosphate = cyclic pyranopterin phosphate + diphosphate. It participates in cofactor biosynthesis; molybdopterin biosynthesis. Its function is as follows. Catalyzes the conversion of (8S)-3',8-cyclo-7,8-dihydroguanosine 5'-triphosphate to cyclic pyranopterin monophosphate (cPMP). This chain is Cyclic pyranopterin monophosphate synthase, found in Cupriavidus necator (strain ATCC 17699 / DSM 428 / KCTC 22496 / NCIMB 10442 / H16 / Stanier 337) (Ralstonia eutropha).